The sequence spans 397 residues: Probable tRNA sulfurtransferase (397 aa).

Residues 60–165 (HPVIEKLQEV…KEGTYITAYD (106 aa)) enclose the THUMP domain. Residues 183 to 184 (ML), 208 to 209 (HF), R265, G287, and Q296 contribute to the ATP site.

This sequence belongs to the ThiI family.

It localises to the cytoplasm. The enzyme catalyses [ThiI sulfur-carrier protein]-S-sulfanyl-L-cysteine + a uridine in tRNA + 2 reduced [2Fe-2S]-[ferredoxin] + ATP + H(+) = [ThiI sulfur-carrier protein]-L-cysteine + a 4-thiouridine in tRNA + 2 oxidized [2Fe-2S]-[ferredoxin] + AMP + diphosphate. It carries out the reaction [ThiS sulfur-carrier protein]-C-terminal Gly-Gly-AMP + S-sulfanyl-L-cysteinyl-[cysteine desulfurase] + AH2 = [ThiS sulfur-carrier protein]-C-terminal-Gly-aminoethanethioate + L-cysteinyl-[cysteine desulfurase] + A + AMP + 2 H(+). Its pathway is cofactor biosynthesis; thiamine diphosphate biosynthesis. Its function is as follows. Catalyzes the ATP-dependent transfer of a sulfur to tRNA to produce 4-thiouridine in position 8 of tRNAs, which functions as a near-UV photosensor. Also catalyzes the transfer of sulfur to the sulfur carrier protein ThiS, forming ThiS-thiocarboxylate. This is a step in the synthesis of thiazole, in the thiamine biosynthesis pathway. The sulfur is donated as persulfide by IscS. The protein is Probable tRNA sulfurtransferase of Anoxybacillus flavithermus (strain DSM 21510 / WK1).